The primary structure comprises 473 residues: MNVGRVVQVIGVVVDVEFEPGKVPPIYNALKIRSEDQDTPTEVPINLTLEVAQHLGNNRVRAVAMSSTDGLVRGMKVVDTGAPITVPVGRPVLGRLLNVLGEPIDGKGPVESDHYYPIHRPAPPLEEQSTRAEILETGIKVIDLLVPFLKGGKIGLFGGAGVGKTVIVMELINNIAKQHGGISVFAGVGERTREGNDLYHEMKEAGVLDKTIMVFGQMNEPPGVRLRVGLTGLTMAEYFRDEEGQDVLLFIDNIFRFTQAGSEVSALLGRMPSAVGYQPTLATEMGQLQERITSTRKGSITSVQAVYVPADDLTDPAPATTFAHLDATVVLSRQIAELGIYPAVDPLDSTSRILDPHIVGEEHYQVARGVQRVLQRYKELQDIIAILGMDELSDEDKLIVARARKLQRFLSQPFTVAEAFTGRPGKYVPVKETIRGFKEILEGKHDDIPETCFYMAGTIDEVVERARELEGSA.

158–165 is an ATP binding site; that stretch reads GGAGVGKT.

Belongs to the ATPase alpha/beta chains family. In terms of assembly, F-type ATPases have 2 components, CF(1) - the catalytic core - and CF(0) - the membrane proton channel. CF(1) has five subunits: alpha(3), beta(3), gamma(1), delta(1), epsilon(1). CF(0) has three main subunits: a(1), b(2) and c(9-12). The alpha and beta chains form an alternating ring which encloses part of the gamma chain. CF(1) is attached to CF(0) by a central stalk formed by the gamma and epsilon chains, while a peripheral stalk is formed by the delta and b chains.

Its subcellular location is the cell membrane. It carries out the reaction ATP + H2O + 4 H(+)(in) = ADP + phosphate + 5 H(+)(out). Its function is as follows. Produces ATP from ADP in the presence of a proton gradient across the membrane. The catalytic sites are hosted primarily by the beta subunits. This Carboxydothermus hydrogenoformans (strain ATCC BAA-161 / DSM 6008 / Z-2901) protein is ATP synthase subunit beta.